Consider the following 247-residue polypeptide: C-type lectin domain family 7 member A (247 aa).

At 1 to 44 the chain is on the cytoplasmic side; that stretch reads MEYHPDLENLDEDGYTQLHFDSQSNTRIAVVSEKGSCAASPPWR. The ITAM-like motif lies at 15-18; that stretch reads YTQL. Residues 45–65 form a helical; Signal-anchor for type II membrane protein membrane-spanning segment; sequence LIAVILGILCLVILVIAVVLG. The Extracellular segment spans residues 66–247; it reads TMAIWRSNSG…YSICEKKFSM (182 aa). Residue asparagine 91 is glycosylated (N-linked (GlcNAc...) asparagine). 3 disulfides stabilise this stretch: cysteine 120-cysteine 131, cysteine 148-cysteine 241, and cysteine 220-cysteine 233. Positions 127–242 constitute a C-type lectin domain; sequence YEKSCYLFSM…CSVPSYSICE (116 aa). A (1,3-beta-D-glucosyl)n-binding site is contributed by 146–153; the sequence is RQCWQLGS. Residues lysine 157, aspartate 159, and glutamate 163 each contribute to the a divalent metal cation site. Glutamate 195 contributes to the (1,3-beta-D-glucosyl)n binding site. Residue glutamate 242 coordinates a divalent metal cation.

In terms of assembly, homodimer. Interacts with SYK; participates in leukocyte activation in presence of fungal pathogens. Interacts with CD37; this interaction controls CLEC7A-mediated IL-6 production. As to quaternary structure, interacts with RANBP9. In terms of processing, phosphorylated on tyrosine residues in response to beta-glucan binding. As to expression, highly expressed in peripheral blood leukocytes and dendritic cells. Detected in spleen, bone marrow, lung, muscle, stomach and placenta.

The protein localises to the cell membrane. It is found in the cytoplasm. Lectin that functions as a pattern recognizing receptor (PRR) specific for beta-1,3-linked and beta-1,6-linked glucans, which constitute cell wall constituents from pathogenic bacteria and fungi. Necessary for the TLR2-mediated inflammatory response and activation of NF-kappa-B: upon beta-glucan binding, recruits SYK via its ITAM motif and promotes a signaling cascade that activates some CARD domain-BCL10-MALT1 (CBM) signalosomes, leading to the activation of NF-kappa-B and MAP kinase p38 (MAPK11, MAPK12, MAPK13 and/or MAPK14) pathways which stimulate expression of genes encoding pro-inflammatory cytokines and chemokines. Enhances cytokine production in macrophages and dendritic cells. Mediates production of reactive oxygen species in the cell. Mediates phagocytosis of C.albicans conidia. Binds T-cells in a way that does not involve their surface glycans and plays a role in T-cell activation. Stimulates T-cell proliferation. Induces phosphorylation of SCIMP after binding beta-glucans. This is C-type lectin domain family 7 member A from Homo sapiens (Human).